The chain runs to 101 residues: Small ribosomal subunit protein uS14 (101 aa).

It belongs to the universal ribosomal protein uS14 family. Part of the 30S ribosomal subunit. Contacts proteins S3 and S10.

Binds 16S rRNA, required for the assembly of 30S particles and may also be responsible for determining the conformation of the 16S rRNA at the A site. This Cupriavidus necator (strain ATCC 17699 / DSM 428 / KCTC 22496 / NCIMB 10442 / H16 / Stanier 337) (Ralstonia eutropha) protein is Small ribosomal subunit protein uS14.